The primary structure comprises 278 residues: 4-deoxy-L-threo-5-hexosulose-uronate ketol-isomerase (278 aa).

The Zn(2+) site is built by His196, His198, Glu203, and His245.

It belongs to the KduI family. It depends on Zn(2+) as a cofactor.

It catalyses the reaction 5-dehydro-4-deoxy-D-glucuronate = 3-deoxy-D-glycero-2,5-hexodiulosonate. It functions in the pathway glycan metabolism; pectin degradation; 2-dehydro-3-deoxy-D-gluconate from pectin: step 4/5. In terms of biological role, catalyzes the isomerization of 5-dehydro-4-deoxy-D-glucuronate to 3-deoxy-D-glycero-2,5-hexodiulosonate. This is 4-deoxy-L-threo-5-hexosulose-uronate ketol-isomerase from Yersinia pestis bv. Antiqua (strain Antiqua).